We begin with the raw amino-acid sequence, 142 residues long: Type II secretion system core protein G (142 aa).

Residues Met-1–Gly-8 constitute a propeptide, leader sequence. Residue Phe-9 is modified to N-methylphenylalanine. Residues Phe-9 to Val-29 form a helical membrane-spanning segment. Residues Ser-122–Lys-142 are disordered.

It belongs to the GSP G family. As to quaternary structure, type II secretion system is composed of four main components: the outer membrane complex, the inner membrane complex, the cytoplasmic secretion ATPase and the periplasm-spanning pseudopilus. Forms homomultimers. In terms of processing, cleaved by the prepilin peptidase. Post-translationally, methylated by prepilin peptidase at the amino group of the N-terminal phenylalanine once the leader sequence is cleaved.

Its subcellular location is the cell inner membrane. Core component of the type II secretion system required for the energy-dependent secretion of extracellular factors such as proteases and toxins from the periplasm. Pseudopilin (pilin-like) protein that polymerizes to form the pseudopilus. Further polymerization triggers pseudopilus growth. The chain is Type II secretion system core protein G from Klebsiella michiganensis (strain ATCC 8724 / DSM 4798 / JCM 20051 / NBRC 3318 / NRRL B-199 / KCTC 1686 / BUCSAV 143 / CCM 1901).